The sequence spans 123 residues: Ragulator complex protein LAMTOR3-A (123 aa).

This sequence belongs to the LAMTOR3 family. Part of the Ragulator complex composed of lamtor1, lamtor2, lamtor3, lamtor4 and lamtor5. The Ragulator complex interacts with slc38a9; the probable amino acid sensor. Component of the lysosomal folliculin complex (LFC).

It is found in the late endosome membrane. In terms of biological role, as part of the Ragulator complex it is involved in amino acid sensing and activation of mTORC1, a signaling complex promoting cell growth in response to growth factors, energy levels, and amino acids. Activated by amino acids through a mechanism involving the lysosomal V-ATPase, the Ragulator plays a dual role for the small GTPases Rag (RagA/RRAGA, RagB/RRAGB, RagC/RRAGC and/or RagD/RRAGD): it (1) acts as a guanine nucleotide exchange factor (GEF), activating the small GTPases Rag and (2) mediates recruitment of Rag GTPases to the lysosome membrane. Activated Ragulator and Rag GTPases function as a scaffold recruiting mTORC1 to lysosomes where it is in turn activated. The polypeptide is Ragulator complex protein LAMTOR3-A (lamtor3-a) (Xenopus laevis (African clawed frog)).